Consider the following 280-residue polypeptide: uncharacterized protein (280 aa).

4 stretches are compositionally biased toward basic and acidic residues: residues 110 to 122 (EKQAHDDHPERLQ), 167 to 177 (ATGEERAECGR), 223 to 261 (ARQHDQRGDRRKGEGDRQKHGDRRGRPDARKNADQRPQQ), and 269 to 280 (DVDRSKSCLEAE). 3 disordered regions span residues 110–137 (EKQAHDDHPERLQNRSVRQRNGDKKTEH), 151–177 (HRGERRSGNCQQQGRHATGEERAECGR), and 219–280 (TIID…LEAE).

This is an uncharacterized protein from Agrobacterium vitis (Rhizobium vitis).